The sequence spans 486 residues: MVQLNQNFIDTITQELPAHLSMDEFIAACDRPLRRSIRVNTLKISSDDFKTLMQPKGWTFDPIPWCEDGFWISYDEEEQLGNALEHIQGLFYIQEASSMLPPTALFTPSAFTTSTKWQCVLDLASAPGSKTTQMAALMQNQGLLVANEYSASRVKVLHANVLRMGASHCALTHFDGRVFGEYLYESFDAVLIDAPCGGEGTVRKDADALKHWSLDDVLAISETQKALIESAFLALKPGGSLVYSTCTLNRLENQGVCEYLKQVYGDAVQFESLSDLFDGAERATTAEGFLHVWPQIYDSEGFFVAKLTKTASVPRLLPEPKLQKNFPFTPASAKQAQGIKDYFQQDLGISLPDELIMVRDDEFWLFPHEFNAFIGRMRFQRIGIKLADSSKHGFKVRHEAIIALAGKQLSPTAKTVDVSDVEAKEYLMGRDIPLATAGKAQGEVIVCYGGAPLGMAKHLGNKLKNNLPRDLVKDKVLLLPEQTKSL.

S-adenosyl-L-methionine-binding positions include 124 to 130 (ASAPGSK), E148, D175, and D193. The active-site Nucleophile is C246.

Belongs to the class I-like SAM-binding methyltransferase superfamily. RsmB/NOP family.

It localises to the cytoplasm. It catalyses the reaction cytidine(1407) in 16S rRNA + S-adenosyl-L-methionine = 5-methylcytidine(1407) in 16S rRNA + S-adenosyl-L-homocysteine + H(+). Its function is as follows. Specifically methylates the cytosine at position 1407 (m5C1407) of 16S rRNA. This Shewanella baltica (strain OS195) protein is Ribosomal RNA small subunit methyltransferase F.